The following is a 399-amino-acid chain: Probable aspartate/prephenate aminotransferase (399 aa).

L-aspartate is bound by residues Gly39, Trp125, and Asn175. Residue Lys239 is modified to N6-(pyridoxal phosphate)lysine. Position 375 (Arg375) interacts with L-aspartate.

The protein belongs to the class-I pyridoxal-phosphate-dependent aminotransferase family. Homodimer. Pyridoxal 5'-phosphate serves as cofactor.

It localises to the cytoplasm. It catalyses the reaction L-aspartate + 2-oxoglutarate = oxaloacetate + L-glutamate. The enzyme catalyses L-arogenate + 2-oxoglutarate = prephenate + L-glutamate. In terms of biological role, catalyzes the reversible conversion of aspartate and 2-oxoglutarate to glutamate and oxaloacetate. Can also transaminate prephenate in the presence of glutamate. This Rickettsia typhi (strain ATCC VR-144 / Wilmington) protein is Probable aspartate/prephenate aminotransferase (aatA).